A 103-amino-acid chain; its full sequence is SLC35A4 upstream open reading frame protein (103 aa).

The helical transmembrane segment at 62–84 (ASAVLGFAVGTCTGIYAAQAYAV) threads the bilayer.

It is found in the mitochondrion inner membrane. Its function is as follows. Required to maintain cellular respiration. This chain is SLC35A4 upstream open reading frame protein, found in Homo sapiens (Human).